We begin with the raw amino-acid sequence, 72 residues long: DNA-directed RNA polymerase subunit epsilon (72 aa).

The protein belongs to the RNA polymerase subunit epsilon family. As to quaternary structure, RNAP is composed of a core of 2 alpha, a beta and a beta' subunit. The core is associated with a delta subunit, and at least one of epsilon or omega. When a sigma factor is associated with the core the holoenzyme is formed, which can initiate transcription.

The enzyme catalyses RNA(n) + a ribonucleoside 5'-triphosphate = RNA(n+1) + diphosphate. A non-essential component of RNA polymerase (RNAP). This is DNA-directed RNA polymerase subunit epsilon from Lactiplantibacillus plantarum (strain ATCC BAA-793 / NCIMB 8826 / WCFS1) (Lactobacillus plantarum).